The following is a 224-amino-acid chain: Peptidyl-prolyl cis-trans isomerase FKBP3 (224 aa).

An N-acetylalanine modification is found at A2. At S36 the chain carries Phosphoserine. The segment covering 89 to 102 has biased composition (basic and acidic residues); it reads KLNEDKPKETKSEE. The tract at residues 89–113 is disordered; it reads KLNEDKPKETKSEETLDEGPPKYTK. K99 carries the post-translational modification N6-acetyllysine. Residues 128 to 224 enclose the PPIase FKBP-type domain; the sequence is GDVVHCWYTG…IFEVELVDID (97 aa). S152 is modified (phosphoserine). The residue at position 170 (K170) is an N6-acetyllysine.

This sequence belongs to the FKBP-type PPIase family.

It is found in the nucleus. The enzyme catalyses [protein]-peptidylproline (omega=180) = [protein]-peptidylproline (omega=0). With respect to regulation, inhibited preferentially by rapamycin over FK506. In terms of biological role, FK506- and rapamycin-binding proteins (FKBPs) constitute a family of receptors for the two immunosuppressants which inhibit T-cell proliferation by arresting two dinstinct cytoplasmic signal transmission pathways. PPIases accelerate the folding of proteins. The chain is Peptidyl-prolyl cis-trans isomerase FKBP3 (FKBP3) from Bos taurus (Bovine).